A 445-amino-acid chain; its full sequence is Ribosomal protein uS12 methylthiotransferase RimO (445 aa).

Residues 4 to 119 enclose the MTTase N-terminal domain; the sequence is YKVGMVSLGC…INEAIMNFIN (116 aa). The [4Fe-4S] cluster site is built by C13, C48, C82, C157, C161, and C164. The Radical SAM core domain maps to 143–373; sequence TTDKATAYLR…MLLQKELSEE (231 aa). Positions 376 to 441 constitute a TRAM domain; it reads KNKLGREYDV…EYDLVGVVCN (66 aa).

Belongs to the methylthiotransferase family. RimO subfamily. The cofactor is [4Fe-4S] cluster.

It is found in the cytoplasm. The enzyme catalyses L-aspartate(89)-[ribosomal protein uS12]-hydrogen + (sulfur carrier)-SH + AH2 + 2 S-adenosyl-L-methionine = 3-methylsulfanyl-L-aspartate(89)-[ribosomal protein uS12]-hydrogen + (sulfur carrier)-H + 5'-deoxyadenosine + L-methionine + A + S-adenosyl-L-homocysteine + 2 H(+). Functionally, catalyzes the methylthiolation of an aspartic acid residue of ribosomal protein uS12. This chain is Ribosomal protein uS12 methylthiotransferase RimO, found in Clostridium perfringens (strain SM101 / Type A).